The chain runs to 123 residues: Modulator protein MzrA (123 aa).

Over 1 to 8 the chain is Cytoplasmic; that stretch reads MIKRPRWQ. The chain crosses the membrane as a helical span at residues 9-29; that stretch reads YVLLIALALLALATLLVPCMV. Residues 30-123 are Periplasmic-facing; sequence RTESELRIRA…EFARAPLNLG (94 aa).

This sequence belongs to the MzrA family. In terms of assembly, interacts with EnvZ.

The protein resides in the cell inner membrane. Its function is as follows. Modulates the activity of the EnvZ/OmpR two-component regulatory system, probably by directly modulating EnvZ enzymatic activity and increasing stability of phosphorylated OmpR. The protein is Modulator protein MzrA of Serratia proteamaculans (strain 568).